The sequence spans 612 residues: Transcription factor Sp2 (612 aa).

Serine 78 bears the Phosphoserine mark. Disordered stretches follow at residues 166 to 195 and 226 to 250; these read TTPS…PVQS and GPAQ…RKKS. Polar residues predominate over residues 184-195; that stretch reads QKSSTTTTPVQS. The short motif at 360–368 is the 9aaTAD; inactive element; that stretch reads GEVQTVLVQ. C2H2-type zinc fingers lie at residues 524–548, 554–578, and 584–606; these read HVCH…VRLH, FVCN…ARTH, and FECA…YKTH.

Belongs to the Sp1 C2H2-type zinc-finger protein family.

The protein resides in the nucleus. Binds to GC box promoters elements and selectively activates mRNA synthesis from genes that contain functional recognition sites. This Mus musculus (Mouse) protein is Transcription factor Sp2 (Sp2).